The primary structure comprises 317 residues: Methionyl-tRNA formyltransferase (317 aa).

110 to 113 (SLLP) contacts (6S)-5,6,7,8-tetrahydrofolate. Positions 292 to 317 (RMKGEDFVRGKNVQPGDVLGEANEEN) are disordered.

This sequence belongs to the Fmt family.

The catalysed reaction is L-methionyl-tRNA(fMet) + (6R)-10-formyltetrahydrofolate = N-formyl-L-methionyl-tRNA(fMet) + (6S)-5,6,7,8-tetrahydrofolate + H(+). Functionally, attaches a formyl group to the free amino group of methionyl-tRNA(fMet). The formyl group appears to play a dual role in the initiator identity of N-formylmethionyl-tRNA by promoting its recognition by IF2 and preventing the misappropriation of this tRNA by the elongation apparatus. In Bacillus velezensis (strain DSM 23117 / BGSC 10A6 / LMG 26770 / FZB42) (Bacillus amyloliquefaciens subsp. plantarum), this protein is Methionyl-tRNA formyltransferase.